Reading from the N-terminus, the 703-residue chain is Elongation factor G 1 (703 aa).

One can recognise a tr-type G domain in the interval 8–291 (ERYRNIGISA…AVIDYLPSPV (284 aa)). GTP contacts are provided by residues 17–24 (AHIDAGKT), 88–92 (DTPGH), and 142–145 (NKMD).

The protein belongs to the TRAFAC class translation factor GTPase superfamily. Classic translation factor GTPase family. EF-G/EF-2 subfamily.

It is found in the cytoplasm. In terms of biological role, catalyzes the GTP-dependent ribosomal translocation step during translation elongation. During this step, the ribosome changes from the pre-translocational (PRE) to the post-translocational (POST) state as the newly formed A-site-bound peptidyl-tRNA and P-site-bound deacylated tRNA move to the P and E sites, respectively. Catalyzes the coordinated movement of the two tRNA molecules, the mRNA and conformational changes in the ribosome. The sequence is that of Elongation factor G 1 from Burkholderia orbicola (strain AU 1054).